The chain runs to 352 residues: C-C chemokine receptor type 5 (352 aa).

The Extracellular segment spans residues 1-30 (MDYQVSSPTYDIDYYTSEPCQKINVKQIAA). The residue at position 3 (Tyr3) is a Sulfotyrosine. Ser6 and Ser7 each carry an O-linked (GalNAc...) serine glycan. Sulfotyrosine occurs at positions 10, 14, and 15. Disulfide bonds link Cys20–Cys269 and Cys101–Cys178. A helical transmembrane segment spans residues 31–58 (RLLPPLYSLVFIFGFVGNMLVILILINC). The Cytoplasmic portion of the chain corresponds to 59–68 (KRLKSMTDIY). The chain crosses the membrane as a helical span at residues 69-89 (LLNLAISDLFFLLTVPFWAHY). Residues 90-102 (AAAQWDFGNTMCQ) lie on the Extracellular side of the membrane. A helical transmembrane segment spans residues 103–124 (LLTGLYFIGFFSGIFFIILLTI). The Cytoplasmic segment spans residues 125-141 (DRYLAIVHAVFALKART). The helical transmembrane segment at 142-166 (VTFGVVTSVITWVVAVFASLPGIIF) threads the bilayer. Residues 167-198 (TRSQKEGLHYTCSSHFPYSQYQFWKNFQTLKI) are Extracellular-facing. A helical transmembrane segment spans residues 199–218 (VILGLVLPLLVMVICYSGIL). At 219 to 235 (KTLLRCRNEKKRHRAVR) the chain is on the cytoplasmic side. A helical membrane pass occupies residues 236–260 (LIFTIMIVYFLFWAPYNIVLLLNTF). Residues 261–277 (QEFFGLNNCSSSNRLDQ) lie on the Extracellular side of the membrane. Residues 278-301 (AMQVTETLGMTHCCINPIIYAFVG) form a helical membrane-spanning segment. Residues 302 to 352 (EKFRNYLLVFFQKHIAKHFCKCCSIFQQEAPERASSVYTRSTGEQEISVGL) are Cytoplasmic-facing. 3 S-palmitoyl cysteine lipidation sites follow: Cys321, Cys323, and Cys324. Phosphoserine; by BARK1 is present on residues Ser336, Ser337, Ser342, and Ser349.

It belongs to the G-protein coupled receptor 1 family. In terms of assembly, interacts with PRAF2. Efficient ligand binding to CCL3/MIP-1alpha and CCL4/MIP-1beta requires sulfation, O-glycosylation and sialic acid modifications. Glycosylation on Ser-6 is required for efficient binding of CCL4. Interacts with GRK2. Interacts with ARRB1 and ARRB2. Interacts with CNIH4. Interacts with S100A4; this interaction stimulates T-lymphocyte chemotaxis. Sulfated on at least 2 of the N-terminal tyrosines. Sulfation is required for efficient binding of the chemokines, CCL3 and CCL4. Post-translationally, palmitoylation in the C-terminal is important for cell surface expression. In terms of processing, phosphorylation on serine residues in the C-terminal is stimulated by binding CC chemokines especially by APO-RANTES. O-glycosylated, but not N-glycosylated. Ser-6 appears to be the major site even if Ser-7 may be also O-glycosylated. Also sialylated glycans present which contribute to chemokine binding. Thr-16 and Ser-17 may also be glycosylated and, if so, with small moieties such as a T-antigen.

The protein localises to the cell membrane. Its function is as follows. Receptor for a number of inflammatory CC-chemokines including CCL3/MIP-1-alpha, CCL4/MIP-1-beta and RANTES and subsequently transduces a signal by increasing the intracellular calcium ion level. May play a role in the control of granulocytic lineage proliferation or differentiation. Participates in T-lymphocyte migration to the infection site by acting as a chemotactic receptor. This Symphalangus syndactylus (Siamang) protein is C-C chemokine receptor type 5 (CCR5).